A 166-amino-acid chain; its full sequence is Interferon gamma (166 aa).

The first 23 residues, 1–23, serve as a signal peptide directing secretion; the sequence is MKYTSYFLALLLCVLLGFSGSYG. Residue glutamine 24 is modified to Pyrrolidone carboxylic acid. Residues asparagine 39 and asparagine 106 are each glycosylated (N-linked (GlcNAc...) asparagine).

The protein belongs to the type II (or gamma) interferon family. As to quaternary structure, homodimer. Interacts with IFNGR1 (via extracellular domain); this interaction promotes IFNGR1 dimerization. In terms of tissue distribution, released primarily from activated T lymphocytes.

It localises to the secreted. Type II interferon produced by immune cells such as T-cells and NK cells that plays crucial roles in antimicrobial, antiviral, and antitumor responses by activating effector immune cells and enhancing antigen presentation. Primarily signals through the JAK-STAT pathway after interaction with its receptor IFNGR1 to affect gene regulation. Upon IFNG binding, IFNGR1 intracellular domain opens out to allow association of downstream signaling components JAK2, JAK1 and STAT1, leading to STAT1 activation, nuclear translocation and transcription of IFNG-regulated genes. Many of the induced genes are transcription factors such as IRF1 that are able to further drive regulation of a next wave of transcription. Plays a role in class I antigen presentation pathway by inducing a replacement of catalytic proteasome subunits with immunoproteasome subunits. In turn, increases the quantity, quality, and repertoire of peptides for class I MHC loading. Increases the efficiency of peptide generation also by inducing the expression of activator PA28 that associates with the proteasome and alters its proteolytic cleavage preference. Up-regulates as well MHC II complexes on the cell surface by promoting expression of several key molecules such as cathepsins B/CTSB, H/CTSH, and L/CTSL. Participates in the regulation of hematopoietic stem cells during development and under homeostatic conditions by affecting their development, quiescence, and differentiation. The protein is Interferon gamma (IFNG) of Bubalus carabanensis (Swamp type water buffalo).